A 365-amino-acid polypeptide reads, in one-letter code: Phosphatidylcholine:ceramide cholinephosphotransferase 2 (365 aa).

Basic and acidic residues predominate over residues 1–14; sequence MDIIETAKLEEHLE. Positions 1 to 52 are disordered; the sequence is MDIIETAKLEEHLENQPSDPTNTYTRPTEPVEEENKNGNGKPKSLSSGLRKG. The segment covering 15–26 has biased composition (polar residues); sequence NQPSDPTNTYTR. Helical transmembrane passes span 80 to 100, 128 to 148, 159 to 179, 218 to 240, and 248 to 268; these read GIAF…ITVV, FSVS…QWLF, FCFI…VTTL, HILC…YLFI, and FWWY…CILV. Residue His-229 is part of the active site. Active-site residues include His-272 and Asp-276. Residues 273-290 traverse the membrane as a helical segment; the sequence is YTVDVIIAYYITTRLFWW. The Cytoplasmic portion of the chain corresponds to 291–365; the sequence is YHSMANEKNL…KIGEDNEKST (75 aa). S-palmitoyl cysteine attachment occurs at residues Cys-331, Cys-332, Cys-343, and Cys-348.

It belongs to the sphingomyelin synthase family. Palmitoylated on Cys-331, Cys-332, Cys-343 and Cys-348; which plays an important role in plasma membrane localization.

The protein resides in the cell membrane. The protein localises to the golgi apparatus membrane. The catalysed reaction is an N-acylsphing-4-enine + a 1,2-diacyl-sn-glycero-3-phosphocholine = a sphingomyelin + a 1,2-diacyl-sn-glycerol. The enzyme catalyses an N-acylsphinganine + a 1,2-diacyl-sn-glycero-3-phosphocholine = an N-acylsphinganine-1-phosphocholine + a 1,2-diacyl-sn-glycerol. It carries out the reaction an N-acyl-(4R)-4-hydroxysphinganine + a 1,2-diacyl-sn-glycero-3-phosphocholine = an N-acyl-(4R)-4-hydroxysphinganine-phosphocholine + a 1,2-diacyl-sn-glycerol. It catalyses the reaction an N-acylsphing-4-enine + a 1,2-diacyl-sn-glycero-3-phosphoethanolamine = an N-acylsphing-4-enine 1-phosphoethanolamine + a 1,2-diacyl-sn-glycerol. The catalysed reaction is an N-acylsphinganine + a 1,2-diacyl-sn-glycero-3-phosphoethanolamine = an N-acylsphinganine-1-phosphoethanolamine + a 1,2-diacyl-sn-glycerol. The enzyme catalyses an N-acyl-(4R)-4-hydroxysphinganine + a 1,2-diacyl-sn-glycero-3-phosphoethanolamine = an N-acyl-(4R)-4-hydroxysphinganine-1-phosphoethanolamine + a 1,2-diacyl-sn-glycerol. It carries out the reaction 1,2-dihexadecanoyl-sn-glycero-3-phosphocholine + an N-acylsphing-4-enine = 1,2-dihexadecanoyl-sn-glycerol + a sphingomyelin. It catalyses the reaction 1-(9Z-octadecenoyl)-2-acyl-sn-3-glycerol + a sphingomyelin = a 1-(9Z-octadecenoyl)-2-acyl-sn-glycero-3-phosphocholine + an N-acylsphing-4-enine. The catalysed reaction is N-hexadecanoylsphinganine + a 1,2-diacyl-sn-glycero-3-phosphocholine = N-hexadecanoyl-sphinganine-1-phosphocholine + a 1,2-diacyl-sn-glycerol. The enzyme catalyses N-hexadecanoyl-(4R)-hydroxysphinganine + a 1,2-diacyl-sn-glycero-3-phosphocholine = N-hexadecanoyl-(4R)-hydroxysphinganine-phosphocholine + a 1,2-diacyl-sn-glycerol. It carries out the reaction N-hexadecanoylsphinganine + a 1,2-diacyl-sn-glycero-3-phosphoethanolamine = N-hexadecanoyl-sphinganine-1-phosphoethanolamine + a 1,2-diacyl-sn-glycerol. It catalyses the reaction N-hexadecanoyl-(4R)-hydroxysphinganine + a 1,2-diacyl-sn-glycero-3-phosphoethanolamine = N-hexadecanoyl-(4R)-hydroxysphinganine-1-phosphoethanolamine + a 1,2-diacyl-sn-glycerol. The protein operates within sphingolipid metabolism. In terms of biological role, sphingomyelin synthase that primarily contributes to sphingomyelin synthesis and homeostasis at the plasma membrane. Catalyzes the reversible transfer of phosphocholine moiety in sphingomyelin biosynthesis: in the forward reaction transfers phosphocholine head group of phosphatidylcholine (PC) on to ceramide (CER) to form ceramide phosphocholine (sphingomyelin, SM) and diacylglycerol (DAG) as by-product, and in the reverse reaction transfers phosphocholine from SM to DAG to form PC and CER. The direction of the reaction appears to depend on the levels of CER and DAG in the plasma membrane. Does not use free phosphorylcholine or CDP-choline as donors. Can also transfer phosphoethanolamine head group of phosphatidylethanolamine (PE) on to ceramide (CER) to form ceramide phosphoethanolamine (CPE). Regulates receptor-mediated signal transduction via mitogenic DAG and proapoptotic CER, as well as via SM, a structural component of membrane rafts that serve as platforms for signal transduction and protein sorting. To a lesser extent, plays a role in secretory transport via regulation of DAG pool at the Golgi apparatus and its downstream effects on PRKD1. Required for normal bone matrix mineralization. This is Phosphatidylcholine:ceramide cholinephosphotransferase 2 (SGMS2) from Macaca fascicularis (Crab-eating macaque).